The sequence spans 253 residues: Porin thermoregulatory protein EnvY (253 aa).

The HTH araC/xylS-type domain occupies 149-246 (DSVCRIIQSD…GLTPLNYLAK (98 aa)). 2 consecutive DNA-binding regions (H-T-H motif) follow at residues 166–187 (RIVA…KNEN) and 213–236 (ITQV…KAFY).

Its function is as follows. Influences the temperature-dependent expression of several E.coli envelope proteins, most notably the porins OmpF and OmpC and the lambda receptor, LamB. This chain is Porin thermoregulatory protein EnvY (envY), found in Escherichia coli (strain K12).